The primary structure comprises 314 residues: MIAISADESPESSSPALRLRWLFLLLLLVLIYGSHAPLLSLCKTQAQIPFSASSCVLLIETSKLFISFASLLASGSVSTLRISISMTTASPYAVPAVLYAFNNHLVVFMQAYMDPSSFQVLSNLKIASTALLYTSCLGKRLHRRQWFAMGLLVSAGVSHSCFSYDLEGKRETAVYITSWGLLLVLVYCFVSGLAAVYTERVLKSQRLPLSMQNLFLYTFGVVVNLASHLSGGEQKGFFEGYSAVVWVIVAGQVANGLLMSVVMKHGTGITRLFVISSAMLVNAVLSWGILGVQLTGYFLFPVVLIGWAVYLYYT.

Topologically, residues 1 to 20 are cytoplasmic; it reads MIAISADESPESSSPALRLR. A helical membrane pass occupies residues 21-41; the sequence is WLFLLLLLVLIYGSHAPLLSL. The Lumenal portion of the chain corresponds to 42–54; it reads CKTQAQIPFSASS. A helical membrane pass occupies residues 55–75; that stretch reads CVLLIETSKLFISFASLLASG. At 76 to 88 the chain is on the cytoplasmic side; that stretch reads SVSTLRISISMTT. A helical transmembrane segment spans residues 89-109; sequence ASPYAVPAVLYAFNNHLVVFM. At 110–145 the chain is on the lumenal side; it reads QAYMDPSSFQVLSNLKIASTALLYTSCLGKRLHRRQ. The chain crosses the membrane as a helical span at residues 146–166; the sequence is WFAMGLLVSAGVSHSCFSYDL. Over 167 to 175 the chain is Cytoplasmic; sequence EGKRETAVY. The helical transmembrane segment at 176 to 196 threads the bilayer; it reads ITSWGLLLVLVYCFVSGLAAV. Over 197 to 206 the chain is Lumenal; that stretch reads YTERVLKSQR. Residues 207 to 227 traverse the membrane as a helical segment; it reads LPLSMQNLFLYTFGVVVNLAS. At 228 to 242 the chain is on the cytoplasmic side; that stretch reads HLSGGEQKGFFEGYS. A helical transmembrane segment spans residues 243-263; sequence AVVWVIVAGQVANGLLMSVVM. Residues 264–267 lie on the Lumenal side of the membrane; sequence KHGT. Residues 268 to 290 form a helical membrane-spanning segment; sequence GITRLFVISSAMLVNAVLSWGIL. Topologically, residues 291–314 are cytoplasmic; it reads GVQLTGYFLFPVVLIGWAVYLYYT.

Belongs to the nucleotide-sugar transporter family. SLC35A subfamily.

It is found in the golgi apparatus membrane. The catalysed reaction is CDP-L-ribitol(in) + CDP(out) = CDP-L-ribitol(out) + CDP(in). Functionally, mediates the transport of CDP-ribitol. Does not exhibit CMP-sialic acid, UDP-galactose and UDP-N-acetylglucosamine transport activity. This chain is Probable UDP-sugar transporter protein SLC35A4, found in Danio rerio (Zebrafish).